The chain runs to 395 residues: MNLSLRRSTSALLASSLLLTIGRGATLPFMTIYLSRQYSLSVDLIGYAMTIALTIGVVFSLGFGILADKFDKKRYMLLAITAFASGFIAITLVNNVTLVVLFFALINCAYSVFATVLKAWFADNLSSTSKTKIFSINYTMLNIGWTIGPPLGTLLVMQSINLPFWLAAICSAFPMLFIQIWVKRSEKIIATETGSVWSPKVLLQDKALLWFTCSGFLASFVSGAFASCISQYVMVIADGDFAEKVVAVVLPVNAAMVVTLQYSVGRRLNPANIRALMTAGTLCFVIGLVGFIFSGNSLLLWGMSAAVFTVGEIIYAPGEYMLIDHIAPPEMKASYFSAQSLGWLGAAINPLVSGVVLTSLPPSSLFVILALVIIAAWVLMLKGIRARPWGQPALC.

12 helical membrane passes run 12–34, 44–66, 75–94, 99–121, 134–156, 160–182, 208–230, 245–264, 271–293, 298–320, 341–360, and 364–381; these read LLAS…TIYL, LIGY…FGIL, YMLL…TLVN, VVLF…KAWF, FSIN…TLLV, INLP…QIWV, LLWF…SCIS, VVAV…QYSV, ANIR…GFIF, LLLW…PGEY, LGWL…LTSL, and SLFV…VLML.

The protein belongs to the major facilitator superfamily.

Its subcellular location is the cell inner membrane. In terms of biological role, a transporter able to export peptides. When overexpressed, allows cells deleted for multiple peptidases (pepA, pepB, pepD and pepN) to grow in the presence of dipeptides Ala-Gln or Gly-Tyr which otherwise inhibit growth. Cells overexpressing this protein have decreased intracellular levels of Ala-Gln dipeptide, and in a system that produces the Ala-Gln dipeptide overproduction of this protein increases export of the dipeptide. This is an uncharacterized protein from Escherichia coli (strain K12).